The chain runs to 146 residues: Hemoglobin subunit beta (146 aa).

The residue at position 1 (Val-1) is an N-acetylvaline. Residues 2 to 146 (HLTAEEKSAV…VATALAHKYH (145 aa)) form the Globin domain. Thr-12 carries the phosphothreonine modification. The residue at position 44 (Ser-44) is a Phosphoserine. Lys-59 carries the N6-acetyllysine modification. His-63 is a binding site for heme b. Lys-82 carries the N6-acetyllysine modification. His-92 contributes to the heme b binding site. Cys-93 carries the post-translational modification S-nitrosocysteine. At Lys-144 the chain carries N6-acetyllysine.

The protein belongs to the globin family. In terms of assembly, heterotetramer of two alpha chains and two beta chains. As to expression, red blood cells.

Involved in oxygen transport from the lung to the various peripheral tissues. This is Hemoglobin subunit beta (HBB) from Cebus albifrons (White-fronted capuchin).